The primary structure comprises 214 residues: Thiamine-phosphate synthase (214 aa).

Residues 38-42 (QLREK) and Asn70 contribute to the 4-amino-2-methyl-5-(diphosphooxymethyl)pyrimidine site. The Mg(2+) site is built by Asp71 and Asp90. Residues Ser109 and Lys138 each coordinate 4-amino-2-methyl-5-(diphosphooxymethyl)pyrimidine. Gly165 lines the 2-[(2R,5Z)-2-carboxy-4-methylthiazol-5(2H)-ylidene]ethyl phosphate pocket.

This sequence belongs to the thiamine-phosphate synthase family. Mg(2+) is required as a cofactor.

The catalysed reaction is 2-[(2R,5Z)-2-carboxy-4-methylthiazol-5(2H)-ylidene]ethyl phosphate + 4-amino-2-methyl-5-(diphosphooxymethyl)pyrimidine + 2 H(+) = thiamine phosphate + CO2 + diphosphate. It carries out the reaction 2-(2-carboxy-4-methylthiazol-5-yl)ethyl phosphate + 4-amino-2-methyl-5-(diphosphooxymethyl)pyrimidine + 2 H(+) = thiamine phosphate + CO2 + diphosphate. The enzyme catalyses 4-methyl-5-(2-phosphooxyethyl)-thiazole + 4-amino-2-methyl-5-(diphosphooxymethyl)pyrimidine + H(+) = thiamine phosphate + diphosphate. The protein operates within cofactor biosynthesis; thiamine diphosphate biosynthesis; thiamine phosphate from 4-amino-2-methyl-5-diphosphomethylpyrimidine and 4-methyl-5-(2-phosphoethyl)-thiazole: step 1/1. Its function is as follows. Condenses 4-methyl-5-(beta-hydroxyethyl)thiazole monophosphate (THZ-P) and 2-methyl-4-amino-5-hydroxymethyl pyrimidine pyrophosphate (HMP-PP) to form thiamine monophosphate (TMP). The protein is Thiamine-phosphate synthase of Caldanaerobacter subterraneus subsp. tengcongensis (strain DSM 15242 / JCM 11007 / NBRC 100824 / MB4) (Thermoanaerobacter tengcongensis).